The primary structure comprises 1563 residues: NACHT domain- and WD repeat-containing protein 1 (1563 aa).

Residues 274 to 314 (TNHQVLEQLRELELARQELGWLYQEIRHHLWQSTESTKVFC) form a WD 1 repeat. Positions 336 to 666 (TPLVLFGPPG…HRQLSQVIQV (331 aa)) constitute an NACHT domain. 342 to 349 (GPPGIGKT) serves as a coordination point for ATP. 12 WD repeats span residues 866–905 (GCHKGITAIAWSLEEKLLVVGTQDGAMVVWDVEEQQVVHV), 908–947 (GHTAEVKCVRVFAQGTLAISASKDHTLRLWSLLSGQEKVT), 954–994 (QNPT…LVFC), 998–1037 (DVSDPWVCVALLAAQGLLLALSKGGQVSLWSSAMGKLQEK), 1044–1082 (KEETPTCAVSIQSRARLVAGFSSGSIALVSAGEDRLLEK), 1126–1165 (EHEDMVETAVLGPENNLIITGSRDALIQVWSLSEQGTLLN), 1168–1207 (EGVGAPVSLLVRGGTLVVSASRKSSSFKVWDLKSTKKLQS), 1212–1251 (LDRTGLAAVSHHGSFVYFPKVGDKNKVTIWDLAEGEEQDC), 1253–1292 (DTSNEVRCLEVAEQAKLLFTGLVSGIVLVFPLNSRQDVLC), 1346–1385 (QLPETIVSVAVLADYRVVYGMSDGSLFLYDCACSKVFPLE), 1386–1425 (AHGSRVSCVEVSHSEQLAVSGAEDALLCLWDLQACRGMFE), and 1431–1470 (SCCRGVRCACFSRDDKHVFAGMEDRSVTAWSTVDGTLLAV). Residues 1534–1563 (AAEASQDAEPVAVEGKESKSNKRSQVCLIL) form a disordered region.

In terms of assembly, may interact with HSP90AA1, HSP90AB1 and BAG2.

It is found in the cytoplasm. The protein resides in the cytosol. In terms of biological role, may play a role in the control of androgen receptor (AR) protein steady-state levels. This is NACHT domain- and WD repeat-containing protein 1 (Nwd1) from Mus musculus (Mouse).